The primary structure comprises 488 residues: Probable malate:quinone oxidoreductase (488 aa).

This sequence belongs to the MQO family. FAD is required as a cofactor.

The enzyme catalyses (S)-malate + a quinone = a quinol + oxaloacetate. Its pathway is carbohydrate metabolism; tricarboxylic acid cycle; oxaloacetate from (S)-malate (quinone route): step 1/1. The protein is Probable malate:quinone oxidoreductase of Neisseria meningitidis serogroup C (strain 053442).